A 453-amino-acid polypeptide reads, in one-letter code: Bifunctional protein GlmU (453 aa).

The tract at residues 1–225 (MNIVILAAGT…EWETLGVNSK (225 aa)) is pyrophosphorylase. UDP-N-acetyl-alpha-D-glucosamine contacts are provided by residues 6–9 (LAAG), Lys20, Gln71, 76–77 (GT), 98–100 (YGD), Gly135, Glu150, Asn165, and Asn223. Asp100 is a Mg(2+) binding site. Asn223 is a Mg(2+) binding site. Residues 226 to 246 (AQLAELERIHQRNVADALLAD) are linker. The interval 247–453 (GVTLADPARI…GYVRPVKKKS (207 aa)) is N-acetyltransferase. Residues Arg329 and Lys347 each contribute to the UDP-N-acetyl-alpha-D-glucosamine site. His359 (proton acceptor) is an active-site residue. Positions 362 and 373 each coordinate UDP-N-acetyl-alpha-D-glucosamine. Acetyl-CoA is bound by residues Ala376, 382 to 383 (NY), Ser401, and Ala419.

It in the N-terminal section; belongs to the N-acetylglucosamine-1-phosphate uridyltransferase family. This sequence in the C-terminal section; belongs to the transferase hexapeptide repeat family. In terms of assembly, homotrimer. Mg(2+) is required as a cofactor.

It is found in the cytoplasm. It carries out the reaction alpha-D-glucosamine 1-phosphate + acetyl-CoA = N-acetyl-alpha-D-glucosamine 1-phosphate + CoA + H(+). The catalysed reaction is N-acetyl-alpha-D-glucosamine 1-phosphate + UTP + H(+) = UDP-N-acetyl-alpha-D-glucosamine + diphosphate. It participates in nucleotide-sugar biosynthesis; UDP-N-acetyl-alpha-D-glucosamine biosynthesis; N-acetyl-alpha-D-glucosamine 1-phosphate from alpha-D-glucosamine 6-phosphate (route II): step 2/2. Its pathway is nucleotide-sugar biosynthesis; UDP-N-acetyl-alpha-D-glucosamine biosynthesis; UDP-N-acetyl-alpha-D-glucosamine from N-acetyl-alpha-D-glucosamine 1-phosphate: step 1/1. The protein operates within bacterial outer membrane biogenesis; LPS lipid A biosynthesis. In terms of biological role, catalyzes the last two sequential reactions in the de novo biosynthetic pathway for UDP-N-acetylglucosamine (UDP-GlcNAc). The C-terminal domain catalyzes the transfer of acetyl group from acetyl coenzyme A to glucosamine-1-phosphate (GlcN-1-P) to produce N-acetylglucosamine-1-phosphate (GlcNAc-1-P), which is converted into UDP-GlcNAc by the transfer of uridine 5-monophosphate (from uridine 5-triphosphate), a reaction catalyzed by the N-terminal domain. The polypeptide is Bifunctional protein GlmU (Burkholderia multivorans (strain ATCC 17616 / 249)).